The primary structure comprises 576 residues: NADH-ubiquinone oxidoreductase chain 5 (576 aa).

Transmembrane regions (helical) follow at residues 6 to 26 (ISFY…LKFL), 46 to 66 (IVMT…VLLI), 88 to 108 (ILLV…PNLI), 109 to 129 (SILL…IYFQ), 149 to 169 (VALL…YIFY), 179 to 199 (MMII…QIPF), 211 to 231 (TPVS…YLLI), 240 to 260 (WWMG…AGLG), 270 to 289 (IIAL…LSMG), 294 to 316 (AFFH…GSII), 339 to 359 (CSCF…AGFY), 363 to 383 (LILE…LFFF), 423 to 443 (IFFL…LMFL), 459 to 479 (LFVC…SLFF), 492 to 512 (FAGS…NYPL), and 556 to 576 (IYLL…VLVN).

This sequence belongs to the complex I subunit 5 family.

Its subcellular location is the mitochondrion inner membrane. It catalyses the reaction a ubiquinone + NADH + 5 H(+)(in) = a ubiquinol + NAD(+) + 4 H(+)(out). Its function is as follows. Core subunit of the mitochondrial membrane respiratory chain NADH dehydrogenase (Complex I) that is believed to belong to the minimal assembly required for catalysis. Complex I functions in the transfer of electrons from NADH to the respiratory chain. The immediate electron acceptor for the enzyme is believed to be ubiquinone. The sequence is that of NADH-ubiquinone oxidoreductase chain 5 (ND5) from Anopheles quadrimaculatus (Common malaria mosquito).